The chain runs to 178 residues: Large ribosomal subunit protein uL6 (178 aa).

This sequence belongs to the universal ribosomal protein uL6 family. As to quaternary structure, part of the 50S ribosomal subunit.

Functionally, this protein binds to the 23S rRNA, and is important in its secondary structure. It is located near the subunit interface in the base of the L7/L12 stalk, and near the tRNA binding site of the peptidyltransferase center. The sequence is that of Large ribosomal subunit protein uL6 from Nitrosococcus oceani (strain ATCC 19707 / BCRC 17464 / JCM 30415 / NCIMB 11848 / C-107).